We begin with the raw amino-acid sequence, 276 residues long: Flagellin FljJ (276 aa).

The segment at 51-80 (RPGAGDMSGLAREDEPGSGDIDRGRGPRAG) is disordered. A compositionally biased stretch (basic and acidic residues) spans 61–75 (AREDEPGSGDIDRGR).

This sequence belongs to the bacterial flagellin family. In terms of assembly, in C.crescentus, the flagellar filament is composed of multiple flagellins of 29 kDa; 27 kDa and 25 kDa.

The protein resides in the secreted. The protein localises to the bacterial flagellum. In terms of biological role, flagellin is the subunit protein which polymerizes to form the filaments of bacterial flagella. In Caulobacter vibrioides (strain ATCC 19089 / CIP 103742 / CB 15) (Caulobacter crescentus), this protein is Flagellin FljJ (fljJ).